We begin with the raw amino-acid sequence, 324 residues long: IDS-like terpene synthase 2 (324 aa).

2 residues coordinate Mg(2+): Asp77 and Asp81.

Belongs to the FPP/GGPP synthase family. It depends on Mg(2+) as a cofactor.

The enzyme catalyses (2E)-geranyl diphosphate = (E)-beta-ocimene + diphosphate. The catalysed reaction is (2E,6E)-farnesyl diphosphate = (3E,6E)-alpha-farnesene + diphosphate. It carries out the reaction (2E,6E,10E)-geranylgeranyl diphosphate = (E,E,E)-alpha-springene + diphosphate. Its function is as follows. Terpene synthase that shows monoterpene synthase activity and produces (E)-beta-ocimene as a major product, using geranyl diphosphate (GPP) as substrate. Also shows sesquiterpene synthase activity as it is able to convert farnesyl diphosphate (FPP) into (E,E)-alpha-farnesene. Finally, TPS2 can convert geranylgeranyl diphosphate into (E,E,E)-alpha-springene. This Melampsora lini (Rust fungus) protein is IDS-like terpene synthase 2.